Here is a 62-residue protein sequence, read N- to C-terminus: Large ribosomal subunit protein uL30 (62 aa).

Belongs to the universal ribosomal protein uL30 family. In terms of assembly, part of the 50S ribosomal subunit.

This chain is Large ribosomal subunit protein uL30, found in Shouchella clausii (strain KSM-K16) (Alkalihalobacillus clausii).